The sequence spans 241 residues: Histidine-rich protein PFHRP-III (241 aa).

Residues 1–21 (MVSFSKNKVLSAAVFASVLLL) form the signal peptide. The segment covering 52 to 76 (AHAGDAHHAHHVADAHHAHHVADAH) has biased composition (basic and acidic residues). 2 disordered regions span residues 52–145 (AHAG…ANAH) and 195–241 (AHHD…HLHH). Residues 84 to 145 (AHHAANAHHA…ANAHHAANAH (62 aa)) are compositionally biased toward low complexity. The span at 195–231 (AHHDGAHHDDAHHDGAHHDDAHHDGAHHDGAHHDGAH) shows a compositional bias: basic and acidic residues.

The protein is Histidine-rich protein PFHRP-III of Plasmodium falciparum.